A 156-amino-acid polypeptide reads, in one-letter code: Protein GLUTAMINE DUMPER 4 (156 aa).

At 1–39 the chain is on the extracellular side; it reads MRPLSIKPTSLDVARHATSVESFGNHRPPISPWHSPVPY. Residues 40–60 form a helical membrane-spanning segment; sequence LFGGLAAMLGLIAFALLILAC. Over 61 to 156 the chain is Cytoplasmic; sequence SYWRLSTSGD…AKENEETTSQ (96 aa). The interval 67 to 87 is disordered; it reads TSGDDSGERVDEEKESRSGVK. The span at 72-84 shows a compositional bias: basic and acidic residues; it reads SGERVDEEKESRS. Positions 99 to 103 match the VIMAG motif; the sequence is VIMAG. Residues 136–156 form a disordered region; it reads AGEEKMGDREKAKENEETTSQ.

It belongs to the GLUTAMINE DUMPER 1 (TC 9.B.60) family. Expressed in the vascular tissues, even in the minor veins of the leaves.

It is found in the membrane. Its function is as follows. Probable subunit of an amino acid transporter involved in the regulation of the amino acid metabolism. Stimulates amino acid export by activating nonselective amino acid facilitators. The protein is Protein GLUTAMINE DUMPER 4 (GDU4) of Arabidopsis thaliana (Mouse-ear cress).